Consider the following 928-residue polypeptide: Zinc metalloproteinase nas-39 (928 aa).

The first 30 residues, 1–30 (MRFSANIAIIVNIIFLFIVVEFVLPTFIRS), serve as a signal peptide directing secretion. Residues 48–247 (AATAKKERIW…RQTKKLYKCA (200 aa)) form the Peptidase M12A domain. N-linked (GlcNAc...) asparagine glycosylation is found at Asn69 and Asn87. Intrachain disulfides connect Cys90/Cys246, Cys111/Cys133, Cys113/Cys114, and Cys249/Cys268. Residue His141 coordinates Zn(2+). Residue Glu142 is part of the active site. Zn(2+) contacts are provided by His145 and His151. CUB domains are found at residues 249–359 (CGGT…YAIC) and 360–476 (GGPI…FTKE). Asn283 carries N-linked (GlcNAc...) asparagine glycosylation. Disulfide bonds link Cys359-Cys385, Cys412-Cys439, Cys480-Cys491, Cys487-Cys500, Cys502-Cys515, and Cys519-Cys545. The EGF-like 1; calcium-binding domain maps to 477-516 (LNECATDKNICHHYCVNTVGGFKCACRVGYSLSSNGFSCD). Positions 519 to 625 (CGGYLKASNG…DGFFANFIAD (107 aa)) constitute a CUB 3 domain. N-linked (GlcNAc...) asparagine glycans are attached at residues Asn527 and Asn560. Cystine bridges form between Cys573/Cys587, Cys629/Cys640, Cys636/Cys649, Cys651/Cys664, Cys669/Cys695, Cys722/Cys744, Cys782/Cys812, and Cys840/Cys863. The EGF-like 2; calcium-binding domain occupies 626–665 (FDECQNDNAGCEHTCQNRLGSYVCTCNPGYILAEDKHNCK). CUB domains lie at 669–781 (CFFE…YTSL) and 782–900 (CGGR…YREA). A glycan (N-linked (GlcNAc...) asparagine) is linked at Asn694. Positions 895–928 (AEYREAPRSSSTKRTFVSKTRHSPLEEPIHDRNE) are disordered. Positions 902 to 912 (RSSSTKRTFVS) are enriched in polar residues. The segment covering 917–928 (SPLEEPIHDRNE) has biased composition (basic and acidic residues).

The cofactor is Zn(2+). Expressed in pharyngeal, vulva and body wall muscles, intestine and several neurons.

It is found in the secreted. Functionally, metalloprotease. This is Zinc metalloproteinase nas-39 from Caenorhabditis elegans.